The following is a 384-amino-acid chain: Probable L-tyrosine/L-aspartate decarboxylase (384 aa).

An N6-(pyridoxal phosphate)lysine modification is found at K233.

It belongs to the group II decarboxylase family. MfnA subfamily. Requires pyridoxal 5'-phosphate as cofactor.

It catalyses the reaction L-tyrosine + H(+) = tyramine + CO2. It carries out the reaction L-aspartate + H(+) = beta-alanine + CO2. It participates in cofactor biosynthesis; methanofuran biosynthesis. Its pathway is cofactor biosynthesis; coenzyme A biosynthesis. Its function is as follows. Catalyzes the decarboxylation of L-tyrosine to produce tyramine for methanofuran biosynthesis. Can also catalyze the decarboxylation of L-aspartate to produce beta-alanine for coenzyme A (CoA) biosynthesis. This is Probable L-tyrosine/L-aspartate decarboxylase from Methanococcus maripaludis (strain C5 / ATCC BAA-1333).